An 844-amino-acid chain; its full sequence is Rho guanine nucleotide exchange factor 33 (844 aa).

Composition is skewed to basic and acidic residues over residues 1-13 (MEKT…ENEH) and 101-113 (QQKI…EKRR). 3 disordered regions span residues 1 to 20 (MEKT…NNPS), 101 to 142 (QQKI…GSPF), and 169 to 189 (AQES…MGPG). Residues 54-129 (LEEKVKSCRC…AKKTQKEEHS (76 aa)) are a coiled coil. The segment covering 130 to 142 (SQAGPAQAQGSPF) has biased composition (polar residues). The 176-residue stretch at 265–440 (KRQTVALELL…RVFISHYTLL (176 aa)) folds into the DH domain. Disordered stretches follow at residues 498–541 (LQPY…DWEL), 668–687 (RPEH…AGSS), and 702–745 (AKPL…RAAQ). Arginine 757 carries the omega-N-methylarginine modification. A compositionally biased stretch (basic and acidic residues) spans 787-800 (DTTRFCPKEERESE). Positions 787–844 (DTTRFCPKEERESEQTSFSDQNPRQDQKGGFRSSFRKLFKKKNGNATGEDFCGPWGWW) are disordered. Over residues 820–829 (SFRKLFKKKN) the composition is skewed to basic residues.

Functionally, may act as a guanine-nucleotide releasing factor. The protein is Rho guanine nucleotide exchange factor 33 (ARHGEF33) of Homo sapiens (Human).